The chain runs to 147 residues: Large ribosomal subunit protein uL15 (147 aa).

The disordered stretch occupies residues 1–42 (MTIKVHHLRPAPGAKTTKTRVGRGEGSKGKTAGRGTKGSKAR).

This sequence belongs to the universal ribosomal protein uL15 family. As to quaternary structure, part of the 50S ribosomal subunit.

Its function is as follows. Binds to the 23S rRNA. The chain is Large ribosomal subunit protein uL15 from Salinispora tropica (strain ATCC BAA-916 / DSM 44818 / JCM 13857 / NBRC 105044 / CNB-440).